A 311-amino-acid chain; its full sequence is Cytochrome f (311 aa).

Residues 1-27 (MRRHLSLVLGSLVIGLALLIAPGASWA) form the signal peptide. Heme is bound by residues Y28, C48, C51, and H52. The helical transmembrane segment at 277–297 (IYGLLAFFAAVAIAQIMLVLK) threads the bilayer.

This sequence belongs to the cytochrome f family. As to quaternary structure, the 4 large subunits of the cytochrome b6-f complex are cytochrome b6, subunit IV (17 kDa polypeptide, PetD), cytochrome f and the Rieske protein, while the 4 small subunits are PetG, PetL, PetM and PetN. The complex functions as a dimer. The cofactor is heme.

The protein resides in the cellular thylakoid membrane. In terms of biological role, component of the cytochrome b6-f complex, which mediates electron transfer between photosystem II (PSII) and photosystem I (PSI), cyclic electron flow around PSI, and state transitions. The chain is Cytochrome f from Synechococcus sp. (strain CC9902).